We begin with the raw amino-acid sequence, 164 residues long: Axial regulator YABBY 5 (164 aa).

The C4-type zinc-finger motif lies at 16–43; sequence CNFCNIILAVNVPCSSLFDIVTVRCGHC.

It belongs to the YABBY family. As to quaternary structure, binds to LUG and LUH; these complexes promote adaxial cell identity in leaves as well as embryonic shoot apical meristem (SAM) initiation and postembryonic SAM maintenance. Interacts with SPL/NZZ and SPEAR2.

It localises to the nucleus. Functionally, promotes adaxial cell identity. Regulates the initiation of embryonic shoot apical meristem (SAM) development. The protein is Axial regulator YABBY 5 (YAB5) of Arabidopsis thaliana (Mouse-ear cress).